We begin with the raw amino-acid sequence, 247 residues long: Ribosomal RNA large subunit methyltransferase E (247 aa).

Residues 1-21 are disordered; sequence MKVNPKNSPKDNLKDSPKVSA. A compositionally biased stretch (basic and acidic residues) spans 8 to 17; it reads SPKDNLKDSP. Positions 80, 82, 108, 124, and 153 each coordinate S-adenosyl-L-methionine. K193 (proton acceptor) is an active-site residue.

It belongs to the class I-like SAM-binding methyltransferase superfamily. RNA methyltransferase RlmE family.

It is found in the cytoplasm. The enzyme catalyses uridine(2552) in 23S rRNA + S-adenosyl-L-methionine = 2'-O-methyluridine(2552) in 23S rRNA + S-adenosyl-L-homocysteine + H(+). In terms of biological role, specifically methylates the uridine in position 2552 of 23S rRNA at the 2'-O position of the ribose in the fully assembled 50S ribosomal subunit. The polypeptide is Ribosomal RNA large subunit methyltransferase E (Polaromonas sp. (strain JS666 / ATCC BAA-500)).